The following is a 363-amino-acid chain: Isopentenyl-diphosphate delta-isomerase (363 aa).

R6 to K7 is a substrate binding site. FMN-binding positions include A64 to T66, S94, and N123. Q153 lines the substrate pocket. E154 lines the Mg(2+) pocket. FMN is bound by residues K185, S210, T215, G259–R261, and S280–A281.

It belongs to the IPP isomerase type 2 family. Homooctamer. Dimer of tetramers. The cofactor is Mg(2+). It depends on FMN as a cofactor. Requires NADPH as cofactor.

It localises to the cytoplasm. It carries out the reaction isopentenyl diphosphate = dimethylallyl diphosphate. Its function is as follows. Involved in the biosynthesis of isoprenoids. Catalyzes the 1,3-allylic rearrangement of the homoallylic substrate isopentenyl (IPP) to its allylic isomer, dimethylallyl diphosphate (DMAPP). This chain is Isopentenyl-diphosphate delta-isomerase, found in Streptomyces sp. (strain CL190).